The primary structure comprises 523 residues: Sorting nexin-2 (523 aa).

Residues 1-104 (MAAEREPPPL…EPSPAVTPVT (104 aa)) are disordered. 2 stretches are compositionally biased toward low complexity: residues 27–48 (LFTS…TSLP) and 93–104 (SSEPSPAVTPVT). Ser97 is subject to Phosphoserine. Phosphothreonine is present on residues Thr101 and Thr104. Phosphoserine occurs at positions 117 and 119. Residues 140–269 (FDIEIGVSDP…QFLESSELPR (130 aa)) enclose the PX domain. The a 1,2-diacyl-sn-glycero-3-phospho-(1D-myo-inositol-3-phosphate) site is built by Arg183, Ser185, Lys211, and Arg235. A Phosphoserine modification is found at Ser185. An interaction with RhoG region spans residues 260 to 523 (QFLESSELPR…AFLPEAKAIA (264 aa)). Ser277 carries the phosphoserine modification. The membrane-binding amphipathic helix stretch occupies residues 278–295 (GAGILRMVNKAADAVNKM). Residues 299–523 (MNESDAWFEE…AFLPEAKAIA (225 aa)) enclose the BAR domain. Lys473 bears the N6-acetyllysine mark.

Belongs to the sorting nexin family. As to quaternary structure, predominantly forms heterodimers with BAR domain-containing sorting nexins SNX5, SNX6 and SNX32; can self-associate to form homodimers. The heterodimers are proposed to self-assemble into helical arrays on the membrane to stabilize and expand local membrane curvature underlying endosomal tubule formation. Thought to be a component of the originally described retromer complex (also called SNX-BAR retromer) which is a pentamer containing the heterotrimeric retromer cargo-selective complex (CSC), also described as vacuolar protein sorting subcomplex (VPS), and a heterodimeric membrane-deforming subcomplex formed between SNX1 or SNX2 and SNX5 or SNX6 (also called SNX-BAR subcomplex); the respective CSC and SNX-BAR subcomplexes associate with low affinity. Interacts with SNX5, SNX6, SNX32, VPS26A, VPS29, VPS35, FNBP1, KALRN, RHOG (GDP-bound form).

It is found in the early endosome membrane. It localises to the cell projection. Its subcellular location is the lamellipodium. Its function is as follows. Involved in several stages of intracellular trafficking. Interacts with membranes containing phosphatidylinositol 3-phosphate (PtdIns(3P)) or phosphatidylinositol 3,5-bisphosphate (PtdIns(3,5)P2). Acts in part as component of the retromer membrane-deforming SNX-BAR subcomplex. The SNX-BAR retromer mediates retrograde transport of cargo proteins from endosomes to the trans-Golgi network (TGN) and is involved in endosome-to-plasma membrane transport for cargo protein recycling. The SNX-BAR subcomplex functions to deform the donor membrane into a tubular profile called endosome-to-TGN transport carrier (ETC). Can sense membrane curvature and has in vitro vesicle-to-membrane remodeling activity. Required for retrograde endosome-to-TGN transport of TGN38. Promotes KALRN- and RHOG-dependent but retromer-independent membrane remodeling such as lamellipodium formation; the function is dependent on GEF activity of KALRN. The sequence is that of Sorting nexin-2 (SNX2) from Pongo abelii (Sumatran orangutan).